Reading from the N-terminus, the 545-residue chain is Tyrosine decarboxylase 2 (545 aa).

Residues 23–44 (GYTNGNGHTNGNGNYNGNGHVN) show a composition bias toward gly residues. The disordered stretch occupies residues 23 to 45 (GYTNGNGHTNGNGNYNGNGHVNG). The L-tyrosine site is built by His245 and His360. N6-(pyridoxal phosphate)lysine is present on Lys361. L-tyrosine is bound at residue Tyr390.

It belongs to the group II decarboxylase family. As to quaternary structure, homotetramer. Requires pyridoxal 5'-phosphate as cofactor. Expressed specifically in flowers.

Its subcellular location is the cytoplasm. It carries out the reaction L-tyrosine + H(+) = tyramine + CO2. Converts tyrosine into tyramine, a precursor of isoquinoline alkaloids and various amides. The polypeptide is Tyrosine decarboxylase 2 (Arabidopsis thaliana (Mouse-ear cress)).